Consider the following 25-residue polypeptide: LASP1 neighbor protein (25 aa).

A helical membrane pass occupies residues 4-24 (IFILMFFAIIGLVILSYIIYL).

The protein resides in the membrane. May play a key role in the skin fibroblasts (FBs)-keratinocyte-like cells (KLCs). This is LASP1 neighbor protein from Homo sapiens (Human).